A 228-amino-acid chain; its full sequence is Translation initiation factor 6 (228 aa).

This sequence belongs to the eIF-6 family.

In terms of biological role, binds to the 50S ribosomal subunit and prevents its association with the 30S ribosomal subunit to form the 70S initiation complex. In Thermococcus onnurineus (strain NA1), this protein is Translation initiation factor 6.